Reading from the N-terminus, the 339-residue chain is D-erythrose-4-phosphate dehydrogenase (339 aa).

NAD(+)-binding positions include 12-13 and R81; that span reads RI. Residues 154-156, R200, 213-214, and R236 contribute to the substrate site; these read SCT and TK. Residue C155 is the Nucleophile of the active site. Residue N318 participates in NAD(+) binding.

The protein belongs to the glyceraldehyde-3-phosphate dehydrogenase family. Epd subfamily. In terms of assembly, homotetramer.

Its subcellular location is the cytoplasm. It catalyses the reaction D-erythrose 4-phosphate + NAD(+) + H2O = 4-phospho-D-erythronate + NADH + 2 H(+). It functions in the pathway cofactor biosynthesis; pyridoxine 5'-phosphate biosynthesis; pyridoxine 5'-phosphate from D-erythrose 4-phosphate: step 1/5. Its function is as follows. Catalyzes the NAD-dependent conversion of D-erythrose 4-phosphate to 4-phosphoerythronate. The chain is D-erythrose-4-phosphate dehydrogenase from Escherichia fergusonii (strain ATCC 35469 / DSM 13698 / CCUG 18766 / IAM 14443 / JCM 21226 / LMG 7866 / NBRC 102419 / NCTC 12128 / CDC 0568-73).